Consider the following 520-residue polypeptide: Peptide chain release factor 3 (520 aa).

Residues 8-277 (ESRKTFAIIS…FAPMPNARQT (270 aa)) form the tr-type G domain. Residues 17–24 (SHPDAGKT), 85–89 (DTPGH), and 139–142 (NKLD) each bind GTP.

This sequence belongs to the TRAFAC class translation factor GTPase superfamily. Classic translation factor GTPase family. PrfC subfamily.

The protein resides in the cytoplasm. Functionally, increases the formation of ribosomal termination complexes and stimulates activities of RF-1 and RF-2. It binds guanine nucleotides and has strong preference for UGA stop codons. It may interact directly with the ribosome. The stimulation of RF-1 and RF-2 is significantly reduced by GTP and GDP, but not by GMP. This Staphylococcus aureus (strain USA300 / TCH1516) protein is Peptide chain release factor 3.